Consider the following 538-residue polypeptide: CWF19-like protein 1 (538 aa).

Disordered regions lie at residues 259-278 and 298-324; these read PDVT…TGKQ and QGRK…PPQP.

The protein belongs to the CWF19 family.

The chain is CWF19-like protein 1 (CWF19L1) from Pongo abelii (Sumatran orangutan).